We begin with the raw amino-acid sequence, 211 residues long: MTVITEEQLGNPAIYQYLLKLVGEEGLELLRRWSDVSYARRWVEEKLSSEDLKAADKARFLAESRRSDEDLVEAERSDEEIAELTGINLNSVRHTLYNLYEHRLAEYRRIKNNETGWLTYLWLMRMDHMNMVLRNEMEVAAGKLAGRLRYDEANDFYQCKNCGITTTFNNAMTTNFSCPQCGTMLVHFDDELIITALKKRLAKMQTALDNA.

Positions 10–130 constitute an HTH TFE/IIEalpha-type domain; it reads GNPAIYQYLL…LWLMRMDHMN (121 aa).

Belongs to the TFE family. In terms of assembly, monomer. Interaction with RNA polymerase subunits RpoF and RpoE is necessary for Tfe stimulatory transcription activity. Able to interact with Tbp and RNA polymerase in the absence of DNA promoter. Interacts both with the preinitiation and elongation complexes.

Transcription factor that plays a role in the activation of archaeal genes transcribed by RNA polymerase. Facilitates transcription initiation by enhancing TATA-box recognition by TATA-box-binding protein (Tbp), and transcription factor B (Tfb) and RNA polymerase recruitment. Not absolutely required for transcription in vitro, but particularly important in cases where Tbp or Tfb function is not optimal. It dynamically alters the nucleic acid-binding properties of RNA polymerases by stabilizing the initiation complex and destabilizing elongation complexes. Seems to translocate with the RNA polymerase following initiation and acts by binding to the non template strand of the transcription bubble in elongation complexes. The polypeptide is Transcription factor E (Methanocorpusculum labreanum (strain ATCC 43576 / DSM 4855 / Z)).